Here is a 97-residue protein sequence, read N- to C-terminus: Putative CC-type chemokine U83 (97 aa).

2 disulfide bridges follow: Cys32-Cys62 and Cys33-Cys76.

It belongs to the intercrine beta (chemokine CC) family. Highly divergent.

This is Putative CC-type chemokine U83 (U83) from Homo sapiens (Human).